The following is a 334-amino-acid chain: Thioredoxin reductase (334 aa).

Residues 10–13 (SGPA), 39–40 (IA), Q44, N53, V86, C143, D287, and 294–296 (RQA) contribute to the FAD site. A disulfide bridge connects residues C140 and C143.

The protein belongs to the class-II pyridine nucleotide-disulfide oxidoreductase family. In terms of assembly, homodimer. The cofactor is FAD.

Its subcellular location is the cytoplasm. It carries out the reaction [thioredoxin]-dithiol + NADP(+) = [thioredoxin]-disulfide + NADPH + H(+). This chain is Thioredoxin reductase (cys-9), found in Neurospora crassa (strain ATCC 24698 / 74-OR23-1A / CBS 708.71 / DSM 1257 / FGSC 987).